A 367-amino-acid chain; its full sequence is MLAVGAMEGTRQSAFLLSSPPLAALHSMAEMKTPLYPAAYPPLPAGPPSSSSSSSSSSSPSPPLGTHNPGGLKPPATGGLSSLGSPPQQLSAATPHGINDILSRPSMPVASGAALPSASPSGSSSSSSSSASASSASAAAAAAAAAAAAASSPAGLLAGLPRFSSLSPPPPPPGLYFSPSAAAVAAVGRYPKPLAELPGRTPIFWPGVMQSPPWRDARLACTPHQGSILLDKDGKRKHTRPTFSGQQIFALEKTFEQTKYLAGPERARLAYSLGMTESQVKVWFQNRRTKWRKKHAAEMATAKKKQDSETERLKGASENEEEDDDYNKPLDPNSDDEKITQLLKKHKSSSGGGGGLLLHASEPESSS.

Residues 36–133 (YPAAYPPLPA…SSSSSSSASA (98 aa)) are disordered. Low complexity-rich tracts occupy residues 48 to 59 (PSSSSSSSSSSS), 78 to 91 (GGLS…QQLS), and 110 to 133 (ASGA…SASA). The repressor domain stretch occupies residues 102-268 (LSRPSMPVAS…KYLAGPERAR (167 aa)). Position 189 is an asymmetric dimethylarginine (Arg189). Residues 236–295 (RKHTRPTFSGQQIFALEKTFEQTKYLAGPERARLAYSLGMTESQVKVWFQNRRTKWRKKH) constitute a DNA-binding region (homeobox). Residues 294–367 (KHAAEMATAK…LHASEPESSS (74 aa)) are disordered. Over residues 304–317 (KKQDSETERLKGAS) the composition is skewed to basic and acidic residues. The interval 306-367 (QDSETERLKG…LHASEPESSS (62 aa)) is involved in DNA-binding.

Pancreatic beta cells.

It localises to the nucleus. Its function is as follows. Transcription factor which binds to specific A/T-rich DNA sequences in the promoter regions of a number of genes. Involved in the development of insulin-producing beta cells in the islets of Langerhans at the secondary transition. Together with NKX2-2 and IRX3 acts to restrict the generation of motor neurons to the appropriate region of the neural tube. Belongs to the class II proteins of neuronal progenitor factors, which are induced by SHH signals. The chain is Homeobox protein Nkx-6.1 (NKX6-1) from Homo sapiens (Human).